The following is a 433-amino-acid chain: Serine--tRNA ligase (433 aa).

239–241 contacts L-serine; it reads TAE. 270–272 lines the ATP pocket; sequence RSE. An L-serine-binding site is contributed by Glu293. Position 357-360 (357-360) interacts with ATP; the sequence is EISS. Ser393 is a binding site for L-serine.

This sequence belongs to the class-II aminoacyl-tRNA synthetase family. Type-1 seryl-tRNA synthetase subfamily. As to quaternary structure, homodimer. The tRNA molecule binds across the dimer.

It localises to the cytoplasm. The enzyme catalyses tRNA(Ser) + L-serine + ATP = L-seryl-tRNA(Ser) + AMP + diphosphate + H(+). It catalyses the reaction tRNA(Sec) + L-serine + ATP = L-seryl-tRNA(Sec) + AMP + diphosphate + H(+). Its pathway is aminoacyl-tRNA biosynthesis; selenocysteinyl-tRNA(Sec) biosynthesis; L-seryl-tRNA(Sec) from L-serine and tRNA(Sec): step 1/1. Its function is as follows. Catalyzes the attachment of serine to tRNA(Ser). Is also able to aminoacylate tRNA(Sec) with serine, to form the misacylated tRNA L-seryl-tRNA(Sec), which will be further converted into selenocysteinyl-tRNA(Sec). The chain is Serine--tRNA ligase from Sorangium cellulosum (strain So ce56) (Polyangium cellulosum (strain So ce56)).